An 88-amino-acid chain; its full sequence is Small ribosomal subunit protein uS15 (88 aa).

It belongs to the universal ribosomal protein uS15 family. Part of the 30S ribosomal subunit. Forms a bridge to the 50S subunit in the 70S ribosome, contacting the 23S rRNA.

One of the primary rRNA binding proteins, it binds directly to 16S rRNA where it helps nucleate assembly of the platform of the 30S subunit by binding and bridging several RNA helices of the 16S rRNA. In terms of biological role, forms an intersubunit bridge (bridge B4) with the 23S rRNA of the 50S subunit in the ribosome. The protein is Small ribosomal subunit protein uS15 of Mycoplasma capricolum subsp. capricolum (strain California kid / ATCC 27343 / NCTC 10154).